Consider the following 234-residue polypeptide: Thymidine kinase, cytosolic (234 aa).

Ser-13 bears the Phosphoserine mark. ATP contacts are provided by residues 26-33, 58-60, and 97-100; these read GPMFSGKS, DTR, and DEGQ. Glu-98 functions as the Proton acceptor in the catalytic mechanism. Substrate is bound at residue Phe-128. Cys-153 and Cys-156 together coordinate Zn(2+). Substrate contacts are provided by residues 172–176 and Tyr-181; that span reads VEVIG. Zn(2+) contacts are provided by Cys-185 and Cys-188. The KEN box signature appears at 203-205; the sequence is KEN.

This sequence belongs to the thymidine kinase family. As to quaternary structure, homotetramer. Tetramerization from dimerization is induced by ATP and increases catalytic efficiency due to a high affinity for thymidine. Tetramerization is inhibited by phosphorylation at Ser-13. Interacts (via the KEN box) with FZR1. Post-translationally, phosphorylated on Ser-13 in mitosis. Phosphorylation of Ser-13 by CDK1 during mitosis reduces homotetramerization and catalytic efficiency when DNA replication is complete and intracellular TK1 is still present at a high level. In terms of processing, polyubiquitinated. Postmitosis, ubiquitination leads to proteasomal degradation. The KEN box sequence located at the C-terminal region targets for degradation by the anaphase promoting complex (APC/C) activated and rate-limited by FZR1.

Its subcellular location is the cytoplasm. It catalyses the reaction thymidine + ATP = dTMP + ADP + H(+). Functionally, cell-cycle-regulated enzyme of importance in nucleotide metabolism. Catalyzes the first enzymatic step in the salvage pathway converting thymidine into thymidine monophosphate. Transcriptional regulation limits expression to the S phase of the cell cycle and transient expression coincides with the oscillation in the intracellular dTTP concentration. The sequence is that of Thymidine kinase, cytosolic (TK1) from Cricetulus griseus (Chinese hamster).